Here is a 288-residue protein sequence, read N- to C-terminus: Bifunctional protein FolD (288 aa).

NADP(+)-binding positions include 166 to 168, Ser191, and Ile232; that span reads GRS.

It belongs to the tetrahydrofolate dehydrogenase/cyclohydrolase family. Homodimer.

The enzyme catalyses (6R)-5,10-methylene-5,6,7,8-tetrahydrofolate + NADP(+) = (6R)-5,10-methenyltetrahydrofolate + NADPH. The catalysed reaction is (6R)-5,10-methenyltetrahydrofolate + H2O = (6R)-10-formyltetrahydrofolate + H(+). It participates in one-carbon metabolism; tetrahydrofolate interconversion. Functionally, catalyzes the oxidation of 5,10-methylenetetrahydrofolate to 5,10-methenyltetrahydrofolate and then the hydrolysis of 5,10-methenyltetrahydrofolate to 10-formyltetrahydrofolate. The protein is Bifunctional protein FolD of Rickettsia africae (strain ESF-5).